Here is an 895-residue protein sequence, read N- to C-terminus: Catenin alpha-3 (895 aa).

Positions Glu74–Arg107 form a coiled coil. Phosphoserine is present on Ser160. A coiled-coil region spans residues Arg325 to Lys379. The residue at position 361 (Thr361) is a Phosphothreonine. The segment at Asp635–Ala660 is disordered. Phosphoserine occurs at positions 637 and 647. Thr649 is subject to Phosphothreonine.

It belongs to the vinculin/alpha-catenin family. Interacts with CTNNB1. Interacts with PKP2. As to expression, expressed in heart (at protein level).

The protein resides in the cytoplasm. It is found in the cytoskeleton. The protein localises to the cell junction. Its subcellular location is the desmosome. Functionally, may be involved in formation of stretch-resistant cell-cell adhesion complexes. The protein is Catenin alpha-3 of Mus musculus (Mouse).